A 220-amino-acid polypeptide reads, in one-letter code: Translation initiation factor 6 (220 aa).

Belongs to the eIF-6 family.

Its function is as follows. Binds to the 50S ribosomal subunit and prevents its association with the 30S ribosomal subunit to form the 70S initiation complex. This Pyrobaculum aerophilum (strain ATCC 51768 / DSM 7523 / JCM 9630 / CIP 104966 / NBRC 100827 / IM2) protein is Translation initiation factor 6.